A 230-amino-acid polypeptide reads, in one-letter code: Dephospho-CoA kinase (230 aa).

A disordered region spans residues 1–21; the sequence is MSKYAAAPSPYSHQPQTPEHK. The DPCK domain occupies 26-225; that stretch reads VVGLTGGIGS…QDYLKLAQQL (200 aa). 34–39 is a binding site for ATP; that stretch reads GSGKSA.

Belongs to the CoaE family.

The protein resides in the cytoplasm. It carries out the reaction 3'-dephospho-CoA + ATP = ADP + CoA + H(+). It participates in cofactor biosynthesis; coenzyme A biosynthesis; CoA from (R)-pantothenate: step 5/5. Catalyzes the phosphorylation of the 3'-hydroxyl group of dephosphocoenzyme A to form coenzyme A. The protein is Dephospho-CoA kinase of Psychrobacter cryohalolentis (strain ATCC BAA-1226 / DSM 17306 / VKM B-2378 / K5).